The sequence spans 60 residues: Probable UDP-arabinopyranose mutase 1 (60 aa).

The protein belongs to the RGP family. As to quaternary structure, homopentamer or homohexamer. Requires Mn(2+) as cofactor. The cofactor is Mg(2+).

The protein localises to the secreted. It is found in the cell wall. The protein resides in the cell junction. Its subcellular location is the plasmodesma. It localises to the golgi apparatus. It carries out the reaction UDP-beta-L-arabinofuranose = UDP-beta-L-arabinopyranose. Functionally, probable UDP-L-arabinose mutase involved in the biosynthesis of cell wall non-cellulosic polysaccharides. In Phoenix dactylifera (Date palm), this protein is Probable UDP-arabinopyranose mutase 1.